The following is a 724-amino-acid chain: 1,4-alpha-glucan branching enzyme GlgB 1 (724 aa).

The Nucleophile role is filled by Asp-403. The active-site Proton donor is the Glu-456.

It belongs to the glycosyl hydrolase 13 family. GlgB subfamily. In terms of assembly, monomer.

The catalysed reaction is Transfers a segment of a (1-&gt;4)-alpha-D-glucan chain to a primary hydroxy group in a similar glucan chain.. The protein operates within glycan biosynthesis; glycogen biosynthesis. Catalyzes the formation of the alpha-1,6-glucosidic linkages in glycogen by scission of a 1,4-alpha-linked oligosaccharide from growing alpha-1,4-glucan chains and the subsequent attachment of the oligosaccharide to the alpha-1,6 position. The protein is 1,4-alpha-glucan branching enzyme GlgB 1 of Xanthomonas campestris pv. campestris (strain 8004).